The primary structure comprises 434 residues: MQDRTLTAEVTPGDEITVAGWVHEIRDLGGIAFLILRDRSGKIQIKFEKDEMNDEIVQTGLDVPRESVISITGVADDEPRAPTDVEIVPTAIEVLSSADTELPLDPSGKVNADLSTRLDNRTLDLRKKEVKAVFQIRSEVLRAARDAFRELGCTEINTPKIVATGTEGGTELFPITYFGEEAFMNQSPQLFKQLMIGSGLERVFEIGPIFRAEEHNTPRHLNEATSIDFESAFINHAEAMDACEYVVTAAYQGVAENCITELETLGLRDGFSVPDESFPRISYQEAIERINATGELDEQLVWGDDLPTDGERALGADVGSHYFITDWPSEIKPFYIKDHDDDKTLSTGFDMMHPQMELVSGGQREHRYEHLVSGFEQQGLDPEQFDYYTKMFRYGMPPHAGWGLGGERLVMTMLGLENIREAVLFPRDRQRLSP.

Residue Glu167 participates in L-aspartate binding. Residues 189–192 (QLFK) form an aspartate region. Arg211 is a binding site for L-aspartate. Residues 211-213 (RAE), 219-221 (RHL), and Glu357 contribute to the ATP site. Mg(2+) contacts are provided by Glu357 and Ser360. The L-aspartate site is built by Ser360 and Arg364. Residue 405 to 408 (GGER) coordinates ATP.

Belongs to the class-II aminoacyl-tRNA synthetase family. Type 2 subfamily. In terms of assembly, homodimer. Mg(2+) serves as cofactor.

Its subcellular location is the cytoplasm. It carries out the reaction tRNA(Asx) + L-aspartate + ATP = L-aspartyl-tRNA(Asx) + AMP + diphosphate. Aspartyl-tRNA synthetase with relaxed tRNA specificity since it is able to aspartylate not only its cognate tRNA(Asp) but also tRNA(Asn). Reaction proceeds in two steps: L-aspartate is first activated by ATP to form Asp-AMP and then transferred to the acceptor end of tRNA(Asp/Asn). The polypeptide is Aspartate--tRNA(Asp/Asn) ligase (Haloquadratum walsbyi (strain DSM 16790 / HBSQ001)).